The primary structure comprises 105 residues: Large ribosomal subunit protein uL24 (105 aa).

Belongs to the universal ribosomal protein uL24 family. In terms of assembly, part of the 50S ribosomal subunit.

One of two assembly initiator proteins, it binds directly to the 5'-end of the 23S rRNA, where it nucleates assembly of the 50S subunit. In terms of biological role, one of the proteins that surrounds the polypeptide exit tunnel on the outside of the subunit. This chain is Large ribosomal subunit protein uL24, found in Xylella fastidiosa (strain M12).